Consider the following 447-residue polypeptide: Putative branched-chain amino acid carrier protein SAB1263c (447 aa).

Helical transmembrane passes span 6 to 26 (WVIG…IFPP), 40 to 60 (ILAF…VGAL), 74 to 94 (PKFS…LFAI), 114 to 134 (SSIA…YICL), 143 to 163 (IGSL…IKGY), 193 to 213 (GYLT…VNAV), 229 to 249 (LTAG…LGYI), 290 to 310 (LLGI…IGAV), 326 to 346 (FVLV…NAVI), 350 to 370 (IPVL…ILIA), 382 to 402 (IPVI…LGWL), and 417 to 437 (LEWF…GIFV).

It belongs to the branched chain amino acid transporter family.

Its subcellular location is the cell membrane. In terms of biological role, component of the transport system for branched-chain amino acids (leucine, isoleucine and valine), which is coupled to a proton motive force (Potential). Contributes to NaCl tolerance. In Staphylococcus aureus (strain bovine RF122 / ET3-1), this protein is Putative branched-chain amino acid carrier protein SAB1263c.